A 197-amino-acid chain; its full sequence is Rac-like GTP-binding protein RHO1 (197 aa).

13–20 (GDGAVGKT) is a binding site for GTP. Residues 35-43 (YVPTVFDNF) carry the Effector region motif. GTP-binding positions include 60–64 (DTAGQ) and 118–121 (TKLD). Position 194 is a cysteine methyl ester (Cys194). The S-geranylgeranyl cysteine moiety is linked to residue Cys194. The propeptide at 195–197 (SIL) is removed in mature form.

Belongs to the small GTPase superfamily. Rho family. Expressed at the tip of pollen tubes.

The protein resides in the cytoplasm. It localises to the membrane. Inactive GDP-bound Rho GTPases reside in the cytosol, are found in a complex with Rho GDP-dissociation inhibitors (Rho GDIs), and are released from the GDI protein in order to translocate to membranes upon activation. May be involved in cell polarity control during the actin-dependent tip growth of pollen tubes. The polypeptide is Rac-like GTP-binding protein RHO1 (RHO1) (Pisum sativum (Garden pea)).